A 502-amino-acid polypeptide reads, in one-letter code: Glutamate--tRNA ligase (502 aa).

The short motif at 12–22 (PSPTGYLHVGG) is the 'HIGH' region element. Residues 259–263 (KLSKR) carry the 'KMSKS' region motif. ATP is bound at residue Lys-262.

It belongs to the class-I aminoacyl-tRNA synthetase family. Glutamate--tRNA ligase type 1 subfamily. In terms of assembly, monomer.

It is found in the cytoplasm. It carries out the reaction tRNA(Glu) + L-glutamate + ATP = L-glutamyl-tRNA(Glu) + AMP + diphosphate. In terms of biological role, catalyzes the attachment of glutamate to tRNA(Glu) in a two-step reaction: glutamate is first activated by ATP to form Glu-AMP and then transferred to the acceptor end of tRNA(Glu). The polypeptide is Glutamate--tRNA ligase (Chlorobium chlorochromatii (strain CaD3)).